The following is a 113-amino-acid chain: Large ribosomal subunit protein bL19 (113 aa).

It belongs to the bacterial ribosomal protein bL19 family.

In terms of biological role, this protein is located at the 30S-50S ribosomal subunit interface and may play a role in the structure and function of the aminoacyl-tRNA binding site. This is Large ribosomal subunit protein bL19 from Corynebacterium glutamicum (strain R).